We begin with the raw amino-acid sequence, 861 residues long: Leucine--tRNA ligase (861 aa).

A 'HIGH' region motif is present at residues 42-52 (PYPSGKLHMGH). Positions 619-623 (KMSKS) match the 'KMSKS' region motif. ATP is bound at residue Lys622.

The protein belongs to the class-I aminoacyl-tRNA synthetase family.

It localises to the cytoplasm. The catalysed reaction is tRNA(Leu) + L-leucine + ATP = L-leucyl-tRNA(Leu) + AMP + diphosphate. The protein is Leucine--tRNA ligase of Actinobacillus pleuropneumoniae serotype 5b (strain L20).